Here is a 247-residue protein sequence, read N- to C-terminus: Homeobox-leucine zipper protein HOX17 (247 aa).

The tract at residues 58–81 is disordered; that stretch reads ERAGLRGGGGSDEEDGGCGIDGSR. The segment at residues 79–138 is a DNA-binding region (homeobox); the sequence is GSRKKLRLSKDQSAVLEDSFREHPTLNPRQKATLAQQLGLRPRQVEVWFQNRRARTKLKQ. Positions 137-182 are leucine-zipper; that stretch reads KQTEVDCEFLKRCCETLTEENRRLQKEVQELRALKLVSPHLYMNMS.

Belongs to the HD-ZIP homeobox family. Class II subfamily. As to expression, expressed in seedlings, roots, stems, leaf sheaths and blades and panicles.

The protein resides in the nucleus. In terms of biological role, probable transcription factor. This is Homeobox-leucine zipper protein HOX17 (HOX17) from Oryza sativa subsp. indica (Rice).